A 218-amino-acid polypeptide reads, in one-letter code: Small ribosomal subunit protein uS3 (218 aa).

One can recognise a KH type-2 domain in the interval 38 to 106 (IREYINKRLQ…REHINIVEIK (69 aa)).

The protein belongs to the universal ribosomal protein uS3 family. Part of the 30S ribosomal subunit. Forms a tight complex with proteins S10 and S14.

In terms of biological role, binds the lower part of the 30S subunit head. Binds mRNA in the 70S ribosome, positioning it for translation. The protein is Small ribosomal subunit protein uS3 of Geobacillus stearothermophilus (Bacillus stearothermophilus).